The following is a 365-amino-acid chain: Gibberellin 20 oxidase 1-B (365 aa).

In terms of domain architecture, Fe2OG dioxygenase spans Gly199 to Pro299. Residues His224, Asp226, and His280 each coordinate Fe cation. The active site involves Arg290.

This sequence belongs to the iron/ascorbate-dependent oxidoreductase family. GA20OX subfamily. Fe cation serves as cofactor. L-ascorbate is required as a cofactor. In terms of tissue distribution, not detected in nodes and the ear of the elongating stem.

It carries out the reaction gibberellin A12 + 2 2-oxoglutarate + 3 O2 + H(+) = gibberellin A9 + 2 succinate + 3 CO2 + 2 H2O. It catalyses the reaction gibberellin A53 + 2 2-oxoglutarate + 3 O2 + H(+) = gibberellin A20 + 2 succinate + 3 CO2 + 2 H2O. Functionally, key oxidase enzyme in the biosynthesis of gibberellin that catalyzes the conversion of GA12 and GA53 to GA9 and GA20 respectively, via a three-step oxidation at C-20 of the GA skeleton. The protein is Gibberellin 20 oxidase 1-B (GA20ox1B) of Triticum aestivum (Wheat).